The following is a 165-amino-acid chain: Nascent polypeptide-associated complex subunit beta (165 aa).

In terms of domain architecture, NAC-A/B spans 33–97; that stretch reads TTDDKRLQST…PQTKKLQDIL (65 aa). The segment at 120–165 is disordered; it reads QKQAPGAGDVPATIQEEDDDDDVPDLVVGETFETPATEEAPKAAAS. The span at 134-143 shows a compositional bias: acidic residues; that stretch reads QEEDDDDDVP. Positions 144-165 are enriched in low complexity; it reads DLVVGETFETPATEEAPKAAAS.

It belongs to the NAC-beta family. In terms of assembly, part of the nascent polypeptide-associated complex (NAC).

This Arabidopsis thaliana (Mouse-ear cress) protein is Nascent polypeptide-associated complex subunit beta.